Consider the following 1124-residue polypeptide: uncharacterized protein (1124 aa).

The first 28 residues, 1–28 (MALFPRSILIALVLSFVLNLGLVTKIHA), serve as a signal peptide directing secretion. A run of 7 helical transmembrane segments spans residues 332 to 352 (IVTA…LLAG), 359 to 379 (EYIN…GINI), 393 to 413 (MIQW…SWVM), 495 to 515 (MLVS…AFMV), 522 to 542 (MISI…FLFA), 555 to 575 (MISF…MFAV), and 700 to 720 (IKNI…MYNF).

Belongs to the TrbL/VirB6 family.

It is found in the cell membrane. This is an uncharacterized protein from Rickettsia prowazekii (strain Madrid E).